A 345-amino-acid polypeptide reads, in one-letter code: S-adenosylmethionine:tRNA ribosyltransferase-isomerase (345 aa).

This sequence belongs to the QueA family. As to quaternary structure, monomer.

Its subcellular location is the cytoplasm. It carries out the reaction 7-aminomethyl-7-carbaguanosine(34) in tRNA + S-adenosyl-L-methionine = epoxyqueuosine(34) in tRNA + adenine + L-methionine + 2 H(+). It functions in the pathway tRNA modification; tRNA-queuosine biosynthesis. Functionally, transfers and isomerizes the ribose moiety from AdoMet to the 7-aminomethyl group of 7-deazaguanine (preQ1-tRNA) to give epoxyqueuosine (oQ-tRNA). This chain is S-adenosylmethionine:tRNA ribosyltransferase-isomerase, found in Lactococcus lactis subsp. lactis (strain IL1403) (Streptococcus lactis).